The following is a 207-amino-acid chain: ATP-dependent Clp protease proteolytic subunit (207 aa).

S111 (nucleophile) is an active-site residue. The active site involves H136.

This sequence belongs to the peptidase S14 family. Fourteen ClpP subunits assemble into 2 heptameric rings which stack back to back to give a disk-like structure with a central cavity, resembling the structure of eukaryotic proteasomes.

The protein localises to the cytoplasm. The catalysed reaction is Hydrolysis of proteins to small peptides in the presence of ATP and magnesium. alpha-casein is the usual test substrate. In the absence of ATP, only oligopeptides shorter than five residues are hydrolyzed (such as succinyl-Leu-Tyr-|-NHMec, and Leu-Tyr-Leu-|-Tyr-Trp, in which cleavage of the -Tyr-|-Leu- and -Tyr-|-Trp bonds also occurs).. Its function is as follows. Cleaves peptides in various proteins in a process that requires ATP hydrolysis. Has a chymotrypsin-like activity. Plays a major role in the degradation of misfolded proteins. The protein is ATP-dependent Clp protease proteolytic subunit of Burkholderia mallei (strain ATCC 23344).